The sequence spans 1012 residues: Vacuolar protein-sorting protein bro-1 (1012 aa).

The region spanning 5–407 (PMISVPLKAT…ERVETANSEM (403 aa)) is the BRO1 domain. Positions 301-330 (ILADATKRHLATVKEKLEELNKENDMIYHQ) form a coiled coil. The disordered stretch occupies residues 558–578 (RKSRKSNPNSPATVEPNLLEA). A coiled-coil region spans residues 719 to 775 (LQSAKNWYKDMRQEAESLEKNVEAFVNNRRAEGAQLLNQIEQDRAANKSSHAALEQE). Disordered regions lie at residues 784–812 (MSMD…SFAP) and 827–1012 (NFST…SAWK). Polar residues predominate over residues 827 to 842 (NFSTQYPASPPATQVP). The span at 844–857 (NPGGQQQTPYQQYN) shows a compositional bias: low complexity. Residues 892 to 913 (QTSFAQSRPYSLTTYGNPSALN) show a composition bias toward polar residues. A compositionally biased stretch (low complexity) spans 914–930 (PQGGQPQQSQPGGYVPP). The segment covering 931–945 (GFVPPPPPPGPPPLG) has biased composition (pro residues). Over residues 970-985 (PGSGQQGPQGQQGGWG) the composition is skewed to gly residues.

Belongs to the BRO1 family.

The protein localises to the cytoplasm. Its subcellular location is the endosome. Its function is as follows. Involved in concentration and sorting of cargo proteins of the multivesicular body (MVB) for incorporation into intralumenal vesicles. This Neurospora crassa (strain ATCC 24698 / 74-OR23-1A / CBS 708.71 / DSM 1257 / FGSC 987) protein is Vacuolar protein-sorting protein bro-1 (bro-1).